A 536-amino-acid chain; its full sequence is Hydroxylamine oxidoreductase (536 aa).

The signal sequence occupies residues 1 to 26; that stretch reads MFEIFKKPLSRIVGATFAFAGVTLLA. Positions 116, 119, 120, 136, 160, 163, 164, 168, 179, 182, 183, 198, 223, 226, 227, 234, 237, 238, 241, 254, 257, and 258 each coordinate heme c. A hydroxylamine-binding site is contributed by His263. Heme c is bound by residues His274, Cys301, Cys304, His305, His311, Cys346, Cys349, His350, His443, and Tyr451.

As to quaternary structure, homotrimer; subunits are linked by two covalent bonds between Tyr-451 of one subunit and heme P460 of an adjacent subunit. Heme c serves as cofactor.

The protein localises to the anammoxosome. The enzyme catalyses hydroxylamine + 3 Fe(III)-[cytochrome c] = nitric oxide + 3 Fe(II)-[cytochrome c] + 3 H(+). Catalyzes the oxidation of hydroxylamine to nitric oxide with cytochrome c acting as an electron acceptor. Does not oxidize hydroxylamine to nitrite. Also able to catalyze the four-electron oxidation of hydrazine to N(2) in vitro with reduced efficiency; however, this reaction is probably not physiological. This is Hydroxylamine oxidoreductase from Kuenenia stuttgartiensis.